The chain runs to 156 residues: Class I hydrophobin B (156 aa).

Residues 1 to 18 form the signal peptide; the sequence is MQFTLSAVVLALAGFSAA. 4 disulfides stabilise this stretch: Cys52–Cys130, Cys60–Cys124, Cys61–Cys101, and Cys131–Cys149.

The protein belongs to the fungal hydrophobin family.

It localises to the secreted. It is found in the cell wall. In terms of biological role, aerial growth, conidiation, and dispersal of filamentous fungi in the environment rely upon a capability of their secreting small amphipathic proteins called hydrophobins (HPBs) with low sequence identity. Class I can self-assemble into an outermost layer of rodlet bundles on aerial cell surfaces, conferring cellular hydrophobicity that supports fungal growth, development and dispersal; whereas Class II form highly ordered films at water-air interfaces through intermolecular interactions but contribute nothing to the rodlet structure. In P.expansum, hydrophobins contribute to germination, tolerance to cold stress and mycotoxins patulin and citrinin production. HfbA and HfbB are essential for fungal surface hydrophobicity. This is Class I hydrophobin B from Penicillium expansum (Blue mold rot fungus).